The chain runs to 212 residues: Thiamine-phosphate synthase (212 aa).

Residues 40-44 and asparagine 75 each bind 4-amino-2-methyl-5-(diphosphooxymethyl)pyrimidine; that span reads QFREK. Positions 76 and 95 each coordinate Mg(2+). 4-amino-2-methyl-5-(diphosphooxymethyl)pyrimidine is bound at residue serine 113. 2-[(2R,5Z)-2-carboxy-4-methylthiazol-5(2H)-ylidene]ethyl phosphate is bound at residue 139–141; that stretch reads TTS. 4-amino-2-methyl-5-(diphosphooxymethyl)pyrimidine is bound at residue lysine 142. 2-[(2R,5Z)-2-carboxy-4-methylthiazol-5(2H)-ylidene]ethyl phosphate-binding positions include glycine 171 and 191-192; that span reads IS.

The protein belongs to the thiamine-phosphate synthase family. Mg(2+) serves as cofactor.

The enzyme catalyses 2-[(2R,5Z)-2-carboxy-4-methylthiazol-5(2H)-ylidene]ethyl phosphate + 4-amino-2-methyl-5-(diphosphooxymethyl)pyrimidine + 2 H(+) = thiamine phosphate + CO2 + diphosphate. The catalysed reaction is 2-(2-carboxy-4-methylthiazol-5-yl)ethyl phosphate + 4-amino-2-methyl-5-(diphosphooxymethyl)pyrimidine + 2 H(+) = thiamine phosphate + CO2 + diphosphate. It catalyses the reaction 4-methyl-5-(2-phosphooxyethyl)-thiazole + 4-amino-2-methyl-5-(diphosphooxymethyl)pyrimidine + H(+) = thiamine phosphate + diphosphate. It functions in the pathway cofactor biosynthesis; thiamine diphosphate biosynthesis; thiamine phosphate from 4-amino-2-methyl-5-diphosphomethylpyrimidine and 4-methyl-5-(2-phosphoethyl)-thiazole: step 1/1. Condenses 4-methyl-5-(beta-hydroxyethyl)thiazole monophosphate (THZ-P) and 2-methyl-4-amino-5-hydroxymethyl pyrimidine pyrophosphate (HMP-PP) to form thiamine monophosphate (TMP). In Staphylococcus saprophyticus subsp. saprophyticus (strain ATCC 15305 / DSM 20229 / NCIMB 8711 / NCTC 7292 / S-41), this protein is Thiamine-phosphate synthase.